The following is a 273-amino-acid chain: Shikimate dehydrogenase (NADP(+)) (273 aa).

Shikimate-binding positions include 15 to 17 and Thr62; that span reads SKS. Lys66 acts as the Proton acceptor in catalysis. Residue Glu78 coordinates NADP(+). Asn87 and Asp103 together coordinate shikimate. Residues 127–131, 151–156, and Met214 contribute to the NADP(+) site; these read GAGGA and NRTHDK. A shikimate-binding site is contributed by Tyr216. NADP(+) is bound at residue Gly238.

This sequence belongs to the shikimate dehydrogenase family. As to quaternary structure, homodimer.

It catalyses the reaction shikimate + NADP(+) = 3-dehydroshikimate + NADPH + H(+). It participates in metabolic intermediate biosynthesis; chorismate biosynthesis; chorismate from D-erythrose 4-phosphate and phosphoenolpyruvate: step 4/7. In terms of biological role, involved in the biosynthesis of the chorismate, which leads to the biosynthesis of aromatic amino acids. Catalyzes the reversible NADPH linked reduction of 3-dehydroshikimate (DHSA) to yield shikimate (SA). This chain is Shikimate dehydrogenase (NADP(+)), found in Shewanella denitrificans (strain OS217 / ATCC BAA-1090 / DSM 15013).